We begin with the raw amino-acid sequence, 488 residues long: MMNRIITANLAFLASSLMLAQVQAAEPVYPDQVKWAGLGTGVCASGYRPLTRDEAMSIKGNLVSRMGQWQITGLADRWVIMGPGYNGEIKQGTAGETWCYPNSPVSGEIPTLSDWNIPAGDEVDVQWRLVHDNDYFIKPVSYLAHYLGYAWVGGNHSPYVGEDMDVTRVGDGWLIKGNNDGGCSGYRCGEKSSIKVSNFSYTLEPDSFSHGQVTESGKQLVKTITANATNYTDLPQQVVVTLKYDKATNWSKTDTYSLSEKVTTKNKFQWPLVGETELAIEIAASQSWASQKGGSTTETVSVEARPTVPPHSSLPVRVALYKSNISYPYEFKAEVNYDLTMKGFLRWGGNAWYTHPDNRPTWEHTLLLGPFRGQGEQHPLPVDKRYIPGEVKWWDWNWTISEYGLSTMQNNLGRVLRPIRSAVTGDFYAESQFAGDIEIGQPQTRSAKAAQLRSASAEEVALTSVDLDSEALANEGFGNVSLTIVPVQ.

A signal peptide spans 1-24 (MMNRIITANLAFLASSLMLAQVQA). Cystine bridges form between C43–C99 and C183–C188. The interval 69 to 85 (WQITGLADRWVIMGPGY) is interaction with host N-linked glycan. Positions 256 to 288 (YSLSEKVTTKNKFQWPLVGETELAIEIAASQSW) are part of the transmembrane beta-barrel after proteolytic activation of the toxin and insertion into the host membrane. Positions 346 to 355 (RWGGNAWYTH) are interaction with glycans from host GPI-anchor. Positions 444 to 488 (TRSAKAAQLRSASAEEVALTSVDLDSEALANEGFGNVSLTIVPVQ) are excised as a propeptide.

The protein belongs to the aerolysin family. Homodimer in solution; homoheptamer in the host membrane. After binding to GPI-anchored proteins in target membranes and proteolytic removal of the C-terminal propeptide, the protein assembles into a heptameric pre-pore complex. A further conformation change leads to insertion into the host membrane. In terms of processing, proteolytic cleavage and subsequent release of the propeptide trigger a major conformation change, leading to the formation of a heptameric pre-pore that then inserts into the host membrane.

The protein localises to the secreted. Its subcellular location is the host cell membrane. In terms of biological role, secreted, cytolytic toxin that forms pores in host membranes after proteolytic removal of a C-terminal propeptide, leading to destruction of the membrane permeability barrier and cell death. The pores are formed by transmembrane beta-strands and are approximately 3 nm in diameter. In Aeromonas sobria, this protein is Aerolysin (asa1).